The primary structure comprises 575 residues: MADRGGVGEAAAVGASPASVPGLNPTLGWRERLRAGLAGTGASLWFVAGLGLLYALRIPLRLCENLAAVTVFLNSLTPKFYVALTGTSSLISGLIFIFEWWYFHKHGTSFIEQVSVSHLQPLMGGTESSISEPGSPSRNRENETSRQNLSECKVWRNPLNLFRGAEYRRYTWVTGKEPLTYYDMNLSAQDHQTFFTCDTDFLRPSDTVMQKAWRERNPPARIKAAYQALELNNDCATAYVLLAEEEATTIVDAERLFKQALKAGETIYRQSQQCQHQSPQHEAQLRRDTNVLVYIKRRLAMCARKLGRIREAVKIMRDLMKEFPPLTMLNIHENLLESLLELQAYPDVQAVLAKYDDISLPKSAAICYTAALLKTRTVSEKFSPETASRRGLSTAEINAVEAIHRAVEFNPHVPKYLLEMKSLILPPEHILKRGDSEAIAYAFFHLQHWKRIEGALNLLQCTWEGTFRMIPYPLEKGHLFYPYPSCTETADRELLPTFHHVSVYPKKELPLFIHFTAGFCSSTAMIAILTHQFPEIMGIFAKAVLGLWCPQPWASSGFEENTQDLKSEDLGLSSG.

2 helical membrane-spanning segments follow: residues 36–56 and 80–100; these read GLAG…LYAL and FYVA…IFEW. Positions 125-147 are disordered; sequence GTESSISEPGSPSRNRENETSRQ. Over residues 126 to 137 the composition is skewed to polar residues; the sequence is TESSISEPGSPS.

It belongs to the ST7 family.

It localises to the membrane. The protein is Suppressor of tumorigenicity 7 protein-like (ST7L) of Homo sapiens (Human).